Consider the following 103-residue polypeptide: uncharacterized protein (103 aa).

This is an uncharacterized protein from Caenorhabditis elegans.